Reading from the N-terminus, the 300-residue chain is Acetaldehyde dehydrogenase 3 (300 aa).

11 to 14 serves as a coordination point for NAD(+); sequence SGNI. Catalysis depends on C126, which acts as the Acyl-thioester intermediate. NAD(+) contacts are provided by residues 157–165 and N276; that span reads SAGPGTRAN.

The protein belongs to the acetaldehyde dehydrogenase family.

The catalysed reaction is acetaldehyde + NAD(+) + CoA = acetyl-CoA + NADH + H(+). This Rhodococcus jostii (strain RHA1) protein is Acetaldehyde dehydrogenase 3 (hsaG).